A 285-amino-acid polypeptide reads, in one-letter code: Tropomyosin alpha-3 chain (285 aa).

Residues 1–285 (MMEAIKKKMQ…DHALNDMTSI (285 aa)) are a coiled coil. Met2 carries the N-acetylmethionine modification. N-acetylalanine is present on Met2. Thr54 is modified (phosphothreonine). 2 positions are modified to phosphoserine: Ser62 and Ser88. Thr109 carries the phosphothreonine modification. Phosphoserine occurs at positions 207 and 216. Ile228 is modified (N6-acetyllysine). Phosphothreonine is present on Thr253. Tyr262 bears the Phosphotyrosine mark. A Phosphoserine modification is found at Ser272. Residue Thr283 is modified to Phosphothreonine. Ser284 is modified (phosphoserine).

Belongs to the tropomyosin family. Homodimer. Heterodimer of an alpha (TPM1, TPM3 or TPM4) and a beta (TPM2) chain. Interacts with TMOD1. Interacts with TNNT1.

It is found in the cytoplasm. It localises to the cytoskeleton. In terms of biological role, binds to actin filaments in muscle and non-muscle cells. Plays a central role, in association with the troponin complex, in the calcium dependent regulation of vertebrate striated muscle contraction. Smooth muscle contraction is regulated by interaction with caldesmon. In non-muscle cells is implicated in stabilizing cytoskeleton actin filaments. This is Tropomyosin alpha-3 chain (Tpm3) from Mus musculus (Mouse).